The chain runs to 240 residues: Uridylate kinase (240 aa).

Residue 12–15 (KLSG) coordinates ATP. Residues 20–25 (GEQGNG) are involved in allosteric activation by GTP. A UMP-binding site is contributed by Gly-54. 2 residues coordinate ATP: Gly-55 and Arg-59. UMP contacts are provided by residues Asp-74 and 135–142 (TGNPYFST). Residues Asn-163, Tyr-169, and Asp-172 each contribute to the ATP site.

Belongs to the UMP kinase family. Homohexamer.

Its subcellular location is the cytoplasm. The enzyme catalyses UMP + ATP = UDP + ADP. Its pathway is pyrimidine metabolism; CTP biosynthesis via de novo pathway; UDP from UMP (UMPK route): step 1/1. Its activity is regulated as follows. Allosterically activated by GTP. Inhibited by UTP. Functionally, catalyzes the reversible phosphorylation of UMP to UDP. This Bacillus licheniformis (strain ATCC 14580 / DSM 13 / JCM 2505 / CCUG 7422 / NBRC 12200 / NCIMB 9375 / NCTC 10341 / NRRL NRS-1264 / Gibson 46) protein is Uridylate kinase.